A 350-amino-acid polypeptide reads, in one-letter code: Beta-hexosaminidase (350 aa).

Residues D73, R81, R148, and 178 to 179 (KH) contribute to the substrate site. Residue H191 is the Proton donor/acceptor of the active site. D262 functions as the Nucleophile in the catalytic mechanism.

The protein belongs to the glycosyl hydrolase 3 family. NagZ subfamily.

The protein localises to the cytoplasm. It carries out the reaction Hydrolysis of terminal non-reducing N-acetyl-D-hexosamine residues in N-acetyl-beta-D-hexosaminides.. The protein operates within cell wall biogenesis; peptidoglycan recycling. In terms of biological role, plays a role in peptidoglycan recycling by cleaving the terminal beta-1,4-linked N-acetylglucosamine (GlcNAc) from peptide-linked peptidoglycan fragments, giving rise to free GlcNAc, anhydro-N-acetylmuramic acid and anhydro-N-acetylmuramic acid-linked peptides. The sequence is that of Beta-hexosaminidase from Bordetella avium (strain 197N).